Here is a 201-residue protein sequence, read N- to C-terminus: Dynactin subunit 6 (201 aa).

The protein belongs to the dynactin subunits 5/6 family. Dynactin subunit 6 subfamily. As to quaternary structure, member of the pointed-end complex of the dynactin shoulder complex which contains dctn4, dctn5 and dctn6 subunits and Actr10. Within the complex dctn6 forms a heterodimer with dctn5. Interacts with plk1.

Its subcellular location is the cytoplasm. It localises to the cytoskeleton. The protein localises to the chromosome. It is found in the centromere. The protein resides in the kinetochore. Functionally, part of the dynactin complex that activates the molecular motor dynein for ultra-processive transport along microtubules. This Xenopus tropicalis (Western clawed frog) protein is Dynactin subunit 6 (dctn6).